The sequence spans 445 residues: Phosphoglucosamine mutase (445 aa).

The active-site Phosphoserine intermediate is the Ser99. Mg(2+) is bound by residues Ser99, Asp242, Asp244, and Asp246. Ser99 carries the phosphoserine modification.

Belongs to the phosphohexose mutase family. It depends on Mg(2+) as a cofactor. In terms of processing, activated by phosphorylation.

The catalysed reaction is alpha-D-glucosamine 1-phosphate = D-glucosamine 6-phosphate. Catalyzes the conversion of glucosamine-6-phosphate to glucosamine-1-phosphate. This chain is Phosphoglucosamine mutase, found in Campylobacter jejuni subsp. jejuni serotype O:23/36 (strain 81-176).